The chain runs to 527 residues: Proline--tRNA ligase (527 aa).

It belongs to the class-II aminoacyl-tRNA synthetase family. ProS type 3 subfamily. Homodimer.

It localises to the cytoplasm. The enzyme catalyses tRNA(Pro) + L-proline + ATP = L-prolyl-tRNA(Pro) + AMP + diphosphate. Functionally, catalyzes the attachment of proline to tRNA(Pro) in a two-step reaction: proline is first activated by ATP to form Pro-AMP and then transferred to the acceptor end of tRNA(Pro). The chain is Proline--tRNA ligase from Sphingopyxis alaskensis (strain DSM 13593 / LMG 18877 / RB2256) (Sphingomonas alaskensis).